Reading from the N-terminus, the 104-residue chain is Cuticle protein 67, isoform B (104 aa).

7 repeat units span residues 7 to 10, 14 to 17, 21 to 24, 28 to 31, 85 to 88, 92 to 95, and 98 to 101.

In terms of biological role, component of the cuticle of migratory locust which contains more than 100 different structural proteins. This Locusta migratoria (Migratory locust) protein is Cuticle protein 67, isoform B.